Consider the following 354-residue polypeptide: Serum paraoxonase/lactonase 3 (354 aa).

A disulfide bridge links Cys42 with Cys352. Asn50 carries N-linked (GlcNAc...) asparagine glycosylation. Positions 53 and 54 each coordinate Ca(2+). The active-site Proton acceptor is His114. Ile116 contacts Ca(2+). Ser165 is subject to Phosphoserine. The Ca(2+) site is built by Asn167, Asp168, Asn223, Asp268, and Asn269. Residues Asn269 and Asn323 are each glycosylated (N-linked (GlcNAc...) asparagine).

This sequence belongs to the paraoxonase family. Homodimer. It depends on Ca(2+) as a cofactor. In terms of processing, glycosylated. Post-translationally, the signal sequence is not cleaved.

It localises to the secreted. The protein resides in the extracellular space. The catalysed reaction is a phenyl acetate + H2O = a phenol + acetate + H(+). It carries out the reaction An aryl dialkyl phosphate + H2O = dialkyl phosphate + an aryl alcohol.. It catalyses the reaction an N-acyl-L-homoserine lactone + H2O = an N-acyl-L-homoserine + H(+). In terms of biological role, has low activity towards the organophosphate paraxon and aromatic carboxylic acid esters. Rapidly hydrolyzes lactones such as statin prodrugs (e.g. lovastatin). Hydrolyzes aromatic lactones and 5- or 6-member ring lactones with aliphatic substituents but not simple lactones or those with polar substituents. The protein is Serum paraoxonase/lactonase 3 (Pon3) of Rattus norvegicus (Rat).